The following is a 326-amino-acid chain: Malate dehydrogenase (326 aa).

NAD(+) is bound at residue 12–18; the sequence is GGTGQIA. Substrate contacts are provided by Arg-93 and Arg-99. NAD(+)-binding positions include Asn-106, Gln-113, and 130 to 132; that span reads VGN. Substrate-binding residues include Asn-132 and Arg-163. His-188 (proton acceptor) is an active-site residue.

Belongs to the LDH/MDH superfamily. MDH type 2 family.

It catalyses the reaction (S)-malate + NAD(+) = oxaloacetate + NADH + H(+). In terms of biological role, catalyzes the reversible oxidation of malate to oxaloacetate. In Chlamydia muridarum (strain MoPn / Nigg), this protein is Malate dehydrogenase.